An 828-amino-acid chain; its full sequence is Leucine--tRNA ligase (828 aa).

Residues P36–H46 carry the 'HIGH' region motif. Residues K595–S599 carry the 'KMSKS' region motif. ATP is bound at residue K598.

This sequence belongs to the class-I aminoacyl-tRNA synthetase family.

Its subcellular location is the cytoplasm. It carries out the reaction tRNA(Leu) + L-leucine + ATP = L-leucyl-tRNA(Leu) + AMP + diphosphate. The sequence is that of Leucine--tRNA ligase from Rickettsia typhi (strain ATCC VR-144 / Wilmington).